The sequence spans 221 residues: uncharacterized protein (221 aa).

The signal sequence occupies residues 1–23 (MNKLIQLALFFTLMLTGCSNSST). A disordered region spans residues 67-221 (ELGKRKAKEE…QGYIDPEDAP (155 aa)). A compositionally biased stretch (basic and acidic residues) spans 68-150 (LGKRKAKEEA…EQKANAEKKR (83 aa)). Positions 70-161 (KRKAKEEAEK…SQAQRQQTEA (92 aa)) form a coiled coil. The segment covering 152 to 161 (SQAQRQQTEA) has biased composition (polar residues). Positions 162–174 (PSSNSQDPPSSSS) are enriched in low complexity. Positions 175–184 (QTDKTIQQPA) are enriched in polar residues. Over residues 195–205 (YEERKKWHDDQ) the composition is skewed to basic and acidic residues.

This is an uncharacterized protein from Bacillus subtilis (strain 168).